The primary structure comprises 229 residues: Sugar fermentation stimulation protein homolog (229 aa).

It belongs to the SfsA family.

In Clostridium novyi (strain NT), this protein is Sugar fermentation stimulation protein homolog.